The sequence spans 352 residues: Dysbindin (352 aa).

Ser11 carries the post-translational modification Phosphoserine. Positions 92 to 180 form a coiled coil; sequence TSLAELQEQL…AELDTEHAQK (89 aa). Residues 243–256 carry the Nuclear export signal motif; the sequence is LMDLSDQEALDVFL. A disordered region spans residues 267 to 352; that stretch reads SPGLEMESNP…SDQCDSTQDI (86 aa). Residues 274 to 285 show a composition bias toward polar residues; sequence SNPSQNEMNLQI. A compositionally biased stretch (low complexity) spans 286-301; that stretch reads PNPSESASQPPASPSA. 2 positions are modified to phosphoserine: Ser340 and Ser343.

This sequence belongs to the dysbindin family. In terms of assembly, interacts (via its coiled coil domain) with KXD1. Interacts with AP3B2, TRIM32, CMYA5, PI4K2 and RNF151. Interacts with the DNA-dependent protein kinase complex DNA-PK; the interaction phosphorylates DTNBP1 in vitro. Interacts directly in this complex with XRCC5 and XRCC6. Interacts with XPO1; the interaction exports DTNBP1 out of the nucleus. Component of the biogenesis of lysosome-related organelles complex 1 (BLOC-1) composed of at least BLOC1S1, BLOC1S2, BLOC1S3, BLOC1S4, BLOC1S5, BLOC1S6, DTNBP1/BLOC1S7 and SNAPIN/BLOC1S8. Interacts directly in the complex with BLOC1S5, BLOC1S6 and SNAPIN/BLOC1S8. The BLOC-1 complex associates with the AP-3 protein complex and membrane protein cargos. This BLOC-1 complex also associates with the BLOC-2 complex in endosomes. Binds to DTNA and DTNB but may not be a physiological binding partner. Interacts with AP3M1. Ubiquitinated by TRIM32. Ubiquitination leads to DTNBP1 degradation. In terms of tissue distribution, detected in hippocampus neurons (at protein level). Ubiquitously expressed. The highest expression is observed in testis, liver, kidney, brain, heart and lung. In the brain, found primarily in axon bundles and axon terminals, notably in the cerebellum and hippocampus. Expressed at lower levels in stomach, small intestine and skeletal muscle, where it is detected at the sarcolemma.

The protein localises to the cytoplasm. Its subcellular location is the cytoplasmic vesicle membrane. It localises to the cytoplasmic vesicle. It is found in the secretory vesicle. The protein resides in the synaptic vesicle membrane. The protein localises to the endosome membrane. Its subcellular location is the melanosome membrane. It localises to the nucleus. It is found in the postsynaptic density. The protein resides in the presynaptic cell membrane. The protein localises to the endoplasmic reticulum. In terms of biological role, component of the BLOC-1 complex, a complex that is required for normal biogenesis of lysosome-related organelles (LRO), such as platelet dense granules and melanosomes. In concert with the AP-3 complex, the BLOC-1 complex is required to target membrane protein cargos into vesicles assembled at cell bodies for delivery into neurites and nerve terminals. The BLOC-1 complex, in association with SNARE proteins, is also proposed to be involved in neurite extension. Associates with the BLOC-2 complex to facilitate the transport of TYRP1 independent of AP-3 function. Plays a role in synaptic vesicle trafficking and in neurotransmitter release. Plays a role in the regulation of cell surface exposure of DRD2. May play a role in actin cytoskeleton reorganization and neurite outgrowth. May modulate MAPK8 phosphorylation. Appears to promote neuronal transmission and viability through regulating the expression of SNAP25 and SYN1, modulating PI3-kinase-Akt signaling and influencing glutamatergic release. Regulates the expression of SYN1 through binding to its promoter. Modulates prefrontal cortical activity via the dopamine/D2 pathway. In Rattus norvegicus (Rat), this protein is Dysbindin (Dtnbp1).